The primary structure comprises 730 residues: MAGEQHAQPTSVPAEAREKHAQLAEQIEEHRFRYYVKDAPVVSDAEFDTLLRSLEALEEEYPELRTPDSPTQKVAGGYETEFTAVQHRERMLSLDNAFDDLGLAAWAERVAKDVGTSDYHFLCELKVDGLAVNLTYEHGRLTRAATRGDGRTGEDITPNVRTIAEIPDRLKGDRIPDLVEIRGEVYFPMEKFEELNARLVEAGDKPFANPRNAAAGSLRQKDPRVTATRPLHMVVHGIGARQGFDIDRLSQAYELLREWGLPTTRYARVVDDLDGVREFIAYYGENRHSVEHEIDGVVVKLDEIPLQGRLGSTSRAPRWAIAWKYAPEEVNTKLINIRVGVGRTGRVTPYAQVEPVTVAGSEVEFATLHNQDVVKAKGVLIGDTVVLRKAGDVIPEILGPVVDLRDGTERAFVMPAECPECGTPLAPAKEGDVDLRCPNARTCPAQLRERLFYLAGRKSLDIEQFGYVAAAALTKPLEPAEPPLLDEGDLFDLTIERLLPIKAYVLDQDSGLPKRDPKTGEEKVATVFANQQGEPRKNAISMLDNIAAAKERPLARILTGLSIRHVGPVAAEALARAFRSIDRIDQATEEELKDTDGVGPIVAAAVKQWFAEDWHREIIRKWKAAGVRMEDERSGEDEGPRPLEGLTVVVTGTLEHHTRDGAKEALQSRGAKVTGSVSKKTSFVVVGDNPGSKYDKAMQLKVPVLNEAGFAVLLEQGPEAAAEVALPTEE.

The segment at 1–23 (MAGEQHAQPTSVPAEAREKHAQL) is disordered. NAD(+)-binding positions include 44-48 (DAEFD), 93-94 (SL), and Glu-124. Residue Lys-126 is the N6-AMP-lysine intermediate of the active site. Arg-147, Glu-184, Lys-300, and Lys-324 together coordinate NAD(+). Positions 418, 421, 437, and 443 each coordinate Zn(2+). The region spanning 638 to 727 (EGPRPLEGLT…PEAAAEVALP (90 aa)) is the BRCT domain.

The protein belongs to the NAD-dependent DNA ligase family. LigA subfamily. Mg(2+) serves as cofactor. The cofactor is Mn(2+).

It carries out the reaction NAD(+) + (deoxyribonucleotide)n-3'-hydroxyl + 5'-phospho-(deoxyribonucleotide)m = (deoxyribonucleotide)n+m + AMP + beta-nicotinamide D-nucleotide.. Functionally, DNA ligase that catalyzes the formation of phosphodiester linkages between 5'-phosphoryl and 3'-hydroxyl groups in double-stranded DNA using NAD as a coenzyme and as the energy source for the reaction. It is essential for DNA replication and repair of damaged DNA. The polypeptide is DNA ligase (Streptomyces avermitilis (strain ATCC 31267 / DSM 46492 / JCM 5070 / NBRC 14893 / NCIMB 12804 / NRRL 8165 / MA-4680)).